Here is a 188-residue protein sequence, read N- to C-terminus: ATP synthase subunit b (188 aa).

The chain crosses the membrane as a helical span at residues 19 to 39 (VYVLGATIVSFLVLFLFITYF).

This sequence belongs to the ATPase B chain family. As to quaternary structure, F-type ATPases have 2 components, F(1) - the catalytic core - and F(0) - the membrane proton channel. F(1) has five subunits: alpha(3), beta(3), gamma(1), delta(1), epsilon(1). F(0) has three main subunits: a(1), b(2) and c(10-14). The alpha and beta chains form an alternating ring which encloses part of the gamma chain. F(1) is attached to F(0) by a central stalk formed by the gamma and epsilon chains, while a peripheral stalk is formed by the delta and b chains.

The protein localises to the cell membrane. In terms of biological role, f(1)F(0) ATP synthase produces ATP from ADP in the presence of a proton or sodium gradient. F-type ATPases consist of two structural domains, F(1) containing the extramembraneous catalytic core and F(0) containing the membrane proton channel, linked together by a central stalk and a peripheral stalk. During catalysis, ATP synthesis in the catalytic domain of F(1) is coupled via a rotary mechanism of the central stalk subunits to proton translocation. Component of the F(0) channel, it forms part of the peripheral stalk, linking F(1) to F(0). The sequence is that of ATP synthase subunit b from Mesomycoplasma hyopneumoniae (strain 7448) (Mycoplasma hyopneumoniae).